The chain runs to 324 residues: Biotin synthase (324 aa).

The region spanning 50 to 278 is the Radical SAM core domain; it reads HAGPAFTCAI…QADILVAGGR (229 aa). [4Fe-4S] cluster-binding residues include cysteine 67, cysteine 71, and cysteine 74. Positions 143 and 203 each coordinate [2Fe-2S] cluster.

The protein belongs to the radical SAM superfamily. Biotin synthase family. Homodimer. It depends on [4Fe-4S] cluster as a cofactor. The cofactor is [2Fe-2S] cluster.

It catalyses the reaction (4R,5S)-dethiobiotin + (sulfur carrier)-SH + 2 reduced [2Fe-2S]-[ferredoxin] + 2 S-adenosyl-L-methionine = (sulfur carrier)-H + biotin + 2 5'-deoxyadenosine + 2 L-methionine + 2 oxidized [2Fe-2S]-[ferredoxin]. The protein operates within cofactor biosynthesis; biotin biosynthesis; biotin from 7,8-diaminononanoate: step 2/2. In terms of biological role, catalyzes the conversion of dethiobiotin (DTB) to biotin by the insertion of a sulfur atom into dethiobiotin via a radical-based mechanism. The polypeptide is Biotin synthase (Oleidesulfovibrio alaskensis (strain ATCC BAA-1058 / DSM 17464 / G20) (Desulfovibrio alaskensis)).